The chain runs to 496 residues: Glycerol kinase 2 (496 aa).

T11 serves as a coordination point for ADP. ATP is bound by residues T11, T12, and S13. T11 lines the sn-glycerol 3-phosphate pocket. R15 serves as a coordination point for ADP. 4 residues coordinate sn-glycerol 3-phosphate: R81, E82, Y133, and D242. 5 residues coordinate glycerol: R81, E82, Y133, D242, and Q243. Positions 264 and 307 each coordinate ADP. ATP-binding residues include T264, G307, Q311, and G408. Positions 408 and 412 each coordinate ADP.

The protein belongs to the FGGY kinase family.

The enzyme catalyses glycerol + ATP = sn-glycerol 3-phosphate + ADP + H(+). Its pathway is polyol metabolism; glycerol degradation via glycerol kinase pathway; sn-glycerol 3-phosphate from glycerol: step 1/1. With respect to regulation, inhibited by fructose 1,6-bisphosphate (FBP). In terms of biological role, key enzyme in the regulation of glycerol uptake and metabolism. Catalyzes the phosphorylation of glycerol to yield sn-glycerol 3-phosphate. This Thermotoga maritima (strain ATCC 43589 / DSM 3109 / JCM 10099 / NBRC 100826 / MSB8) protein is Glycerol kinase 2.